The following is a 152-amino-acid chain: Ribonuclease H (152 aa).

An RNase H type-1 domain is found at 1–142 (MKEVTIYTDG…CDELARAAIA (142 aa)). Mg(2+) contacts are provided by D9, E47, D69, and D134.

The protein belongs to the RNase H family. As to quaternary structure, monomer. The cofactor is Mg(2+).

The protein resides in the cytoplasm. It catalyses the reaction Endonucleolytic cleavage to 5'-phosphomonoester.. In terms of biological role, endonuclease that specifically degrades the RNA of RNA-DNA hybrids. The sequence is that of Ribonuclease H from Moorella thermoacetica (strain ATCC 39073 / JCM 9320).